The primary structure comprises 664 residues: Transketolase 1 (664 aa).

H26 contacts substrate. Residues H66 and 114–116 (GPL) each bind thiamine diphosphate. D155 lines the Mg(2+) pocket. G156 and N185 together coordinate thiamine diphosphate. Residues N185 and I187 each coordinate Mg(2+). Substrate contacts are provided by H260, R357, and S384. Thiamine diphosphate is bound at residue H260. The Proton donor role is filled by E411. F437 is a thiamine diphosphate binding site. Positions 461, 469, and 520 each coordinate substrate.

The protein belongs to the transketolase family. As to quaternary structure, homodimer. It depends on Mg(2+) as a cofactor. The cofactor is Ca(2+). Mn(2+) serves as cofactor. Requires Co(2+) as cofactor. Thiamine diphosphate is required as a cofactor.

It carries out the reaction D-sedoheptulose 7-phosphate + D-glyceraldehyde 3-phosphate = aldehydo-D-ribose 5-phosphate + D-xylulose 5-phosphate. Catalyzes the transfer of a two-carbon ketol group from a ketose donor to an aldose acceptor, via a covalent intermediate with the cofactor thiamine pyrophosphate. This is Transketolase 1 (tkt1) from Aliivibrio fischeri (strain ATCC 700601 / ES114) (Vibrio fischeri).